The chain runs to 288 residues: Protein-S-isoprenylcysteine O-methyltransferase (288 aa).

Residues 13 to 29 (SIVSFTLGASVISLPLL) traverse the membrane as a helical segment. Over 30–45 (TSSFTEQTLLAAAPGR) the chain is Lumenal. The helical transmembrane segment at 46–63 (IALVFFIAALNGLLLLLY) threads the bilayer. Residues 64-73 (KAQLYQVAIR) are Cytoplasmic-facing. The helical transmembrane segment at 74–91 (ASFLGFAFGCGLLLSITQ) threads the bilayer. Over 92 to 96 (SPWKP) the chain is Lumenal. A helical membrane pass occupies residues 97-116 (FGWYVCSLSFFHYSEYLVTA). Topologically, residues 117-135 (MNNPRSLSIDSFLLNHSLE) are cytoplasmic. A helical transmembrane segment spans residues 136–153 (YTLAALSSWVEFTIETTI). At 154–158 (YPDLK) the chain is on the lumenal side. A helical membrane pass occupies residues 159-178 (QITWLSVIGLIMVLFGEVLR). Residues 179 to 216 (KCAMLTAGSNFNHIVQNEKSDSHTLVTSGVYSWFRHPS) lie on the Cytoplasmic side of the membrane. S-adenosyl-L-methionine is bound by residues Q194, 201–204 (HTLV), Y209, and 214–217 (HPSY). Residues 217–232 (YVGWFYWSIGTQVLLC) traverse the membrane as a helical segment. Position 233 (N233) is a topological domain, lumenal. Residues 234–248 (PLCLVGYTLASWRFF) traverse the membrane as a helical segment. The Cytoplasmic segment spans residues 249–288 (SERIEEEEFSLIHFFGENYLEYKKKVPTGLPFIKGVKMEP). R251 contacts substrate. S-adenosyl-L-methionine is bound at residue E255.

The protein belongs to the class VI-like SAM-binding methyltransferase superfamily. Isoprenylcysteine carboxyl methyltransferase family.

The protein localises to the endoplasmic reticulum membrane. The catalysed reaction is [protein]-C-terminal S-[(2E,6E)-farnesyl]-L-cysteine + S-adenosyl-L-methionine = [protein]-C-terminal S-[(2E,6E)-farnesyl]-L-cysteine methyl ester + S-adenosyl-L-homocysteine. In terms of biological role, catalyzes the post-translational methylation of isoprenylated C-terminal cysteine residues. The polypeptide is Protein-S-isoprenylcysteine O-methyltransferase (icmt) (Xenopus laevis (African clawed frog)).